Consider the following 52-residue polypeptide: Disintegrin multisquamatin (52 aa).

In terms of domain architecture, Disintegrin spans Glu-1–Pro-50. Intrachain disulfides connect Cys-5-Cys-14, Cys-10-Cys-35, Cys-11-Cys-40, and Cys-23-Cys-42. The short motif at Arg-27 to Asp-29 is the Cell attachment site element.

This sequence belongs to the venom metalloproteinase (M12B) family. P-II subfamily. P-IIa sub-subfamily. Monomer. In terms of tissue distribution, expressed by the venom gland.

The protein localises to the secreted. Inhibits ADP-induced human, canine and rabbit platelet aggregation by binding with high affinity to alpha-IIb/beta-3 (ITGA2B/ITGB3). The sequence is that of Disintegrin multisquamatin from Echis multisquamatus (Central Asian sand viper).